Consider the following 62-residue polypeptide: MIQISDLLLIANVSPEVAGSSGFNMIASFFAAALLIVIPAATFLIFVSQNDSLDRTSATRRR.

Residues 26 to 46 (IASFFAAALLIVIPAATFLIF) form a helical membrane-spanning segment.

This sequence belongs to the PsbX family. Type 2 subfamily. As to quaternary structure, PSII consists of a core antenna complex that captures photons, and an electron transfer chain that converts photonic excitation into a charge separation. PSII forms dimeric complexes.

It is found in the cellular thylakoid membrane. Its function is as follows. Involved in the binding and/or turnover of quinones at the Q(B) site of Photosystem II. This chain is Photosystem II reaction center X protein, found in Prochlorococcus marinus (strain MIT 9515).